The following is a 317-amino-acid chain: 4-hydroxy-3-methylbut-2-enyl diphosphate reductase (317 aa).

C12 contacts [4Fe-4S] cluster. Residues H43 and H81 each contribute to the (2E)-4-hydroxy-3-methylbut-2-enyl diphosphate site. Dimethylallyl diphosphate contacts are provided by H43 and H81. Positions 43 and 81 each coordinate isopentenyl diphosphate. C103 contributes to the [4Fe-4S] cluster binding site. H131 is a binding site for (2E)-4-hydroxy-3-methylbut-2-enyl diphosphate. Residue H131 participates in dimethylallyl diphosphate binding. H131 is an isopentenyl diphosphate binding site. The Proton donor role is filled by E133. T172 serves as a coordination point for (2E)-4-hydroxy-3-methylbut-2-enyl diphosphate. C200 is a binding site for [4Fe-4S] cluster. Residues S228, N230, and S273 each contribute to the (2E)-4-hydroxy-3-methylbut-2-enyl diphosphate site. S228, N230, and S273 together coordinate dimethylallyl diphosphate. Isopentenyl diphosphate-binding residues include S228, N230, and S273.

Belongs to the IspH family. The cofactor is [4Fe-4S] cluster.

It catalyses the reaction isopentenyl diphosphate + 2 oxidized [2Fe-2S]-[ferredoxin] + H2O = (2E)-4-hydroxy-3-methylbut-2-enyl diphosphate + 2 reduced [2Fe-2S]-[ferredoxin] + 2 H(+). The catalysed reaction is dimethylallyl diphosphate + 2 oxidized [2Fe-2S]-[ferredoxin] + H2O = (2E)-4-hydroxy-3-methylbut-2-enyl diphosphate + 2 reduced [2Fe-2S]-[ferredoxin] + 2 H(+). It participates in isoprenoid biosynthesis; dimethylallyl diphosphate biosynthesis; dimethylallyl diphosphate from (2E)-4-hydroxy-3-methylbutenyl diphosphate: step 1/1. It functions in the pathway isoprenoid biosynthesis; isopentenyl diphosphate biosynthesis via DXP pathway; isopentenyl diphosphate from 1-deoxy-D-xylulose 5-phosphate: step 6/6. Catalyzes the conversion of 1-hydroxy-2-methyl-2-(E)-butenyl 4-diphosphate (HMBPP) into a mixture of isopentenyl diphosphate (IPP) and dimethylallyl diphosphate (DMAPP). Acts in the terminal step of the DOXP/MEP pathway for isoprenoid precursor biosynthesis. This chain is 4-hydroxy-3-methylbut-2-enyl diphosphate reductase, found in Exiguobacterium sp. (strain ATCC BAA-1283 / AT1b).